We begin with the raw amino-acid sequence, 260 residues long: MKRYTVKDIEALLPKLGADDPRWEMLRQDERKSVQALLARFERQKARRHAIEQRWEELMRYERELYAAGVRRIAGIDEAGRGPLAGPVVAAAVILPKDAYLPGLDDSKRLTPEKREALFAQIEACAVAIGIGIVSAAEIDERNIYEATRQAMAKAVNALSPPPEHLLVDAMAVPCPLPQQRLIKGDANSASIAAASVIAKVTRDRWMKELDRRYPQYGFARHMGYGTPEHFEAIRRYGVTPEHRRSFAPVREVLKASEQL.

The 189-residue stretch at 71-259 (RRIAGIDEAG…VREVLKASEQ (189 aa)) folds into the RNase H type-2 domain. 3 residues coordinate a divalent metal cation: D77, E78, and D169.

It belongs to the RNase HII family. It depends on Mn(2+) as a cofactor. Requires Mg(2+) as cofactor.

The protein resides in the cytoplasm. The enzyme catalyses Endonucleolytic cleavage to 5'-phosphomonoester.. In terms of biological role, endonuclease that specifically degrades the RNA of RNA-DNA hybrids. This chain is Ribonuclease HII, found in Geobacillus kaustophilus (strain HTA426).